A 446-amino-acid chain; its full sequence is Keratin, type I cytoskeletal 25 (446 aa).

Residues 1 to 74 form a head region; the sequence is MSLRLSSGSR…VNEGGLLSGN (74 aa). Residues 75–110 form a coil 1A region; sequence EKVTMQNLNDRLASYLDNVQALQEANADLEQKIKGW. Residues 75–390 form the IF rod domain; sequence EKVTMQNLND…LLIGGDEGAC (316 aa). Residues 111 to 132 form a linker 1 region; sequence YEKFGPGSCRGLDHDYSRYFPI. The segment at 133 to 224 is coil 1B; that stretch reads IDDLKNQIIT…KNHKEEMQAL (92 aa). The linker 12 stretch occupies residues 225-247; it reads QCAAGGNVNVEMNAAPGVDLTVL. The interval 248 to 386 is coil 2; it reads LNNMRAEYEA…ETYCLLIGGD (139 aa). The tail stretch occupies residues 387 to 446; it reads EGACKSSSYKSKDYGSGNAGNQIKDPVKAIVVKKVLEEVDQRSKILTTRLHSLEEKSQSN. Ser438 carries the phosphoserine modification.

The protein belongs to the intermediate filament family. In terms of assembly, heterodimer of a type I and a type II keratin. Heterodimer with type II keratin KRT5 leading to the formation of keratin intermediate filament (KIF) network. Interacts with KRT6A to form filaments.

It is found in the cytoplasm. In terms of biological role, essential for the proper assembly of type I and type II keratin protein complexes and formation of keratin intermediate filaments in the inner root sheath (irs). Plays a role in the cytoskeleton organization. The polypeptide is Keratin, type I cytoskeletal 25 (Mus musculus (Mouse)).